A 169-amino-acid polypeptide reads, in one-letter code: Large ribosomal subunit protein uL10 (169 aa).

The protein belongs to the universal ribosomal protein uL10 family. In terms of assembly, part of the ribosomal stalk of the 50S ribosomal subunit. The N-terminus interacts with L11 and the large rRNA to form the base of the stalk. The C-terminus forms an elongated spine to which L12 dimers bind in a sequential fashion forming a multimeric L10(L12)X complex.

Its function is as follows. Forms part of the ribosomal stalk, playing a central role in the interaction of the ribosome with GTP-bound translation factors. This Rickettsia peacockii (strain Rustic) protein is Large ribosomal subunit protein uL10.